A 336-amino-acid polypeptide reads, in one-letter code: Holliday junction branch migration complex subunit RuvB (336 aa).

The interval 4-184 (ADRLISAGAT…FGIVQRLEFY (181 aa)) is large ATPase domain (RuvB-L). Residues I23, R24, G65, K68, T69, T70, 131–133 (EDY), R174, Y184, and R221 each bind ATP. T69 serves as a coordination point for Mg(2+). A small ATPAse domain (RuvB-S) region spans residues 185–255 (QVPDLQHIVG…IAAQALDMLN (71 aa)). The head domain (RuvB-H) stretch occupies residues 258–336 (AEGFDYMDRK…HFGITPPEMP (79 aa)). DNA is bound by residues R294, R313, and R318.

The protein belongs to the RuvB family. Homohexamer. Forms an RuvA(8)-RuvB(12)-Holliday junction (HJ) complex. HJ DNA is sandwiched between 2 RuvA tetramers; dsDNA enters through RuvA and exits via RuvB. An RuvB hexamer assembles on each DNA strand where it exits the tetramer. Each RuvB hexamer is contacted by two RuvA subunits (via domain III) on 2 adjacent RuvB subunits; this complex drives branch migration. In the full resolvosome a probable DNA-RuvA(4)-RuvB(12)-RuvC(2) complex forms which resolves the HJ.

It localises to the cytoplasm. The catalysed reaction is ATP + H2O = ADP + phosphate + H(+). Functionally, the RuvA-RuvB-RuvC complex processes Holliday junction (HJ) DNA during genetic recombination and DNA repair, while the RuvA-RuvB complex plays an important role in the rescue of blocked DNA replication forks via replication fork reversal (RFR). RuvA specifically binds to HJ cruciform DNA, conferring on it an open structure. The RuvB hexamer acts as an ATP-dependent pump, pulling dsDNA into and through the RuvAB complex. RuvB forms 2 homohexamers on either side of HJ DNA bound by 1 or 2 RuvA tetramers; 4 subunits per hexamer contact DNA at a time. Coordinated motions by a converter formed by DNA-disengaged RuvB subunits stimulates ATP hydrolysis and nucleotide exchange. Immobilization of the converter enables RuvB to convert the ATP-contained energy into a lever motion, pulling 2 nucleotides of DNA out of the RuvA tetramer per ATP hydrolyzed, thus driving DNA branch migration. The RuvB motors rotate together with the DNA substrate, which together with the progressing nucleotide cycle form the mechanistic basis for DNA recombination by continuous HJ branch migration. Branch migration allows RuvC to scan DNA until it finds its consensus sequence, where it cleaves and resolves cruciform DNA. This is Holliday junction branch migration complex subunit RuvB from Salmonella agona (strain SL483).